The primary structure comprises 907 residues: MESRIWCLVVCVNLCIVCLGAAVSSSSTRGTSATHSHHSSHTTSAAHSRSGSVSQRVTSSQTVSHGVNETIYNTTLKYGDVVGVNTTKYPYRVCSMAQGTDLIRFERNIVCTSMKPINEDLDEGIMVVYKRNIVAHTFKVRVYQKVLTFRRSYAYIHTTYLLGSNTEYVAPPMWEIHHINSHSQCYSSYSRVIAGTVFVAYHRDSYENKTMQLMPDDYSNTHSTRYVTVKDQWHSRGSTWLYRETCNLNCMVTITTARSKYPYHFFATSTGDVVDISPFYNGTNRNASYFGENADKFFIFPNYTIVSDFGRPNSALETHRLVAFLERADSVISWDIQDEKNVTCQLTFWEASERTIRSEAEDSYHFSSAKMTATFLSKKQEVNMSDSALDCVRDEAINKLQQIFNTSYNQTYEKYGNVSVFETTGGLVVFWQGIKQKSLVELERLANRSSLNLTHNRTKRSTDGNNATHLSNMESVHNLVYAQLQFTYDTLRGYINRALAQIAEAWCVDQRRTLEVFKELSKINPSAILSAIYNKPIAARFMGDVLGLASCVTINQTSVKVLRDMNVKESPGRCYSRPVVIFNFANSSYVQYGQLGEDNEILLGNHRTEECQLPSLKIFIAGNSAYEYVDYLFKRMIDLSSISTVDSMIALDIDPLENTDFRVLELYSQKELRSSNVFDLEEIMREFNSYKQRVKYVEDKVVDPLPPYLKGLDDLMSGLGAAGKAVGVAIGAVGGAVASVVEGVATFLKNPFGAFTIILVAIAVVIITYLIYTRQRRLCTQPLQNLFPYLVSADGTTVTSGSTKDTSLQAPPSYEESVYNSGRKGPGPPSSDASTAAPPYTNEQAYQMLLALARLDAEQRAQQNGTDSLDGRTGTQDKGQKPNLLDRLRHRKNGYRHLKDSDEEENV.

The N-terminal stretch at 1 to 24 is a signal peptide; the sequence is MESRIWCLVVCVNLCIVCLGAAVS. The Virion surface segment spans residues 25-751; that stretch reads SSSTRGTSAT…EGVATFLKNP (727 aa). The segment at 29-62 is disordered; sequence RGTSATHSHHSSHTTSAAHSRSGSVSQRVTSSQT. Over residues 41–62 the composition is skewed to low complexity; sequence HTTSAAHSRSGSVSQRVTSSQT. Residues Asn-68, Asn-73, and Asn-85 are each glycosylated (N-linked (GlcNAc...) asparagine; by host). Disulfide bonds link Cys-94/Cys-551, Cys-111/Cys-507, Cys-185/Cys-250, and Cys-344/Cys-391. The interval 152-158 is involved in fusion and/or binding to host membrane; sequence SYAYIHT. Residue Asn-208 is glycosylated (N-linked (GlcNAc...) asparagine; by host). An involved in fusion and/or binding to host membrane region spans residues 237–244; that stretch reads GSTWLYRE. 14 N-linked (GlcNAc...) asparagine; by host glycosylation sites follow: Asn-281, Asn-286, Asn-302, Asn-341, Asn-383, Asn-405, Asn-409, Asn-417, Asn-447, Asn-452, Asn-456, Asn-466, Asn-555, and Asn-586. Residues Cys-574 and Cys-611 are joined by a disulfide bond. The tract at residues 697–749 is hydrophobic membrane proximal region; it reads VEDKVVDPLPPYLKGLDDLMSGLGAAGKAVGVAIGAVGGAVASVVEGVATFLK. Residues 752–772 form a helical membrane-spanning segment; that stretch reads FGAFTIILVAIAVVIITYLIY. Residues 773–907 lie on the Intravirion side of the membrane; that stretch reads TRQRRLCTQP…LKDSDEEENV (135 aa). Polar residues-rich tracts occupy residues 798-810 and 860-877; these read VTSG…SLQA and RAQQ…GTQD. Disordered regions lie at residues 798–838 and 857–907; these read VTSG…TAAP and AEQR…EENV. Residues 878–887 show a composition bias toward basic and acidic residues; that stretch reads KGQKPNLLDR. Residues 895-898 carry the Internalization motif motif; sequence YRHL.

It belongs to the herpesviridae glycoprotein B family. As to quaternary structure, homotrimer; disulfide-linked. Binds to heparan sulfate proteoglycans. Interacts with gH/gL heterodimer. In terms of processing, a proteolytic cleavage by host furin generates two subunits that remain linked by disulfide bonds.

It localises to the virion membrane. The protein resides in the host cell membrane. It is found in the host endosome membrane. The protein localises to the host Golgi apparatus membrane. Its function is as follows. Envelope glycoprotein that forms spikes at the surface of virion envelope. Essential for the initial attachment to heparan sulfate moieties of the host cell surface proteoglycans. Involved in fusion of viral and cellular membranes leading to virus entry into the host cell. Following initial binding to its host receptors, membrane fusion is mediated by the fusion machinery composed at least of gB and the heterodimer gH/gL. May be involved in the fusion between the virion envelope and the outer nuclear membrane during virion egress. The protein is Envelope glycoprotein B of Human cytomegalovirus (strain Merlin) (HHV-5).